The sequence spans 251 residues: CDP-diacylglycerol pyrophosphatase (251 aa).

A helical membrane pass occupies residues 4–24 (AGLLFLVMIVIAVVAAGIGYW).

This sequence belongs to the Cdh family.

The protein localises to the cell inner membrane. The catalysed reaction is a CDP-1,2-diacyl-sn-glycerol + H2O = a 1,2-diacyl-sn-glycero-3-phosphate + CMP + 2 H(+). It participates in phospholipid metabolism; CDP-diacylglycerol degradation; phosphatidate from CDP-diacylglycerol: step 1/1. In Escherichia coli (strain K12 / MC4100 / BW2952), this protein is CDP-diacylglycerol pyrophosphatase.